Here is a 158-residue protein sequence, read N- to C-terminus: Cyclic pyranopterin monophosphate synthase (158 aa).

Substrate contacts are provided by residues 75 to 77 and 113 to 114; these read LCH and ME. The active site involves Asp-128.

It belongs to the MoaC family. In terms of assembly, homohexamer; trimer of dimers.

It catalyses the reaction (8S)-3',8-cyclo-7,8-dihydroguanosine 5'-triphosphate = cyclic pyranopterin phosphate + diphosphate. Its pathway is cofactor biosynthesis; molybdopterin biosynthesis. Its function is as follows. Catalyzes the conversion of (8S)-3',8-cyclo-7,8-dihydroguanosine 5'-triphosphate to cyclic pyranopterin monophosphate (cPMP). The sequence is that of Cyclic pyranopterin monophosphate synthase from Pasteurella multocida (strain Pm70).